The primary structure comprises 235 residues: Ribonuclease PH (235 aa).

Residues Arg86 and 124–126 (GTR) each bind phosphate.

Belongs to the RNase PH family. As to quaternary structure, homohexameric ring arranged as a trimer of dimers.

The enzyme catalyses tRNA(n+1) + phosphate = tRNA(n) + a ribonucleoside 5'-diphosphate. Its function is as follows. Phosphorolytic 3'-5' exoribonuclease that plays an important role in tRNA 3'-end maturation. Removes nucleotide residues following the 3'-CCA terminus of tRNAs; can also add nucleotides to the ends of RNA molecules by using nucleoside diphosphates as substrates, but this may not be physiologically important. Probably plays a role in initiation of 16S rRNA degradation (leading to ribosome degradation) during starvation. This is Ribonuclease PH from Francisella tularensis subsp. tularensis (strain FSC 198).